The primary structure comprises 88 residues: Cell division topological specificity factor (88 aa).

Belongs to the MinE family.

Prevents the cell division inhibition by proteins MinC and MinD at internal division sites while permitting inhibition at polar sites. This ensures cell division at the proper site by restricting the formation of a division septum at the midpoint of the long axis of the cell. The chain is Cell division topological specificity factor from Clostridium kluyveri (strain ATCC 8527 / DSM 555 / NBRC 12016 / NCIMB 10680 / K1).